A 985-amino-acid chain; its full sequence is Ephrin type-A receptor 4-B (985 aa).

A signal peptide spans 1-20 (MAGIVHGILFCGLFGLCWAV). The Extracellular segment spans residues 21–547 (TGSRIYPASE…MIGEGTSPTV (527 aa)). Positions 30 to 209 (EVTLLDSRSV…FYKKCPLTVR (180 aa)) constitute an Eph LBD domain. Fibronectin type-III domains are found at residues 328-438 (PPSA…TNQA) and 439-536 (APST…TVPS). 2 N-linked (GlcNAc...) asparagine glycosylation sites follow: N340 and N407. Residues 548–569 (LLVSVAGSIVLVVILIAAFVIS) form a helical membrane-spanning segment. Topologically, residues 570–985 (RRRSKYSKAK…QQMQGRMVPV (416 aa)) are cytoplasmic. Phosphotyrosine; by autocatalysis is present on residues Y595 and Y601. The region spanning 620 to 881 (IKIEKVIGVG…QIVSMLDKLI (262 aa)) is the Protein kinase domain. ATP contacts are provided by residues 626–634 (IGVGEFGEV) and K652. Residue D745 is the Proton acceptor of the active site. Residues Y778 and Y927 each carry the phosphotyrosine; by autocatalysis modification. Positions 910-974 (SQVASVLDWL…LSSVQGMRTQ (65 aa)) constitute an SAM domain. The short motif at 983–985 (VPV) is the PDZ-binding element.

Belongs to the protein kinase superfamily. Tyr protein kinase family. Ephrin receptor subfamily. Localized expression in a subset of neural crest and neural tissues in embryos.

It localises to the cell membrane. Its subcellular location is the early endosome. The catalysed reaction is L-tyrosyl-[protein] + ATP = O-phospho-L-tyrosyl-[protein] + ADP + H(+). Functionally, receptor tyrosine kinase which binds membrane-bound ephrin family ligands residing on adjacent cells, leading to contact-dependent bidirectional signaling into neighboring cells. The signaling pathway downstream of the receptor is referred to as forward signaling while the signaling pathway downstream of the ephrin ligand is referred to as reverse signaling. Highly promiscuous, it has the unique property among Eph receptors to bind and to be physiologically activated by both GPI-anchored ephrin-A and transmembrane ephrin-B ligands including EFNA1 and EFNB3. Upon activation by ephrin ligands, modulates cell morphology and integrin-dependent cell adhesion through regulation of the Rac, Rap and Rho GTPases activity. Plays an important role in the development of the nervous system controlling different steps of axonal guidance including the establishment of the corticospinal projections. The polypeptide is Ephrin type-A receptor 4-B (epha4-b) (Xenopus laevis (African clawed frog)).